Here is a 200-residue protein sequence, read N- to C-terminus: A-type ATP synthase subunit E (200 aa).

The protein belongs to the V-ATPase E subunit family. As to quaternary structure, has multiple subunits with at least A(3), B(3), C, D, E, F, H, I and proteolipid K(x).

The protein localises to the cell membrane. Functionally, component of the A-type ATP synthase that produces ATP from ADP in the presence of a proton gradient across the membrane. The sequence is that of A-type ATP synthase subunit E from Aeropyrum pernix (strain ATCC 700893 / DSM 11879 / JCM 9820 / NBRC 100138 / K1).